Reading from the N-terminus, the 444-residue chain is Crh-like protein 3 (444 aa).

A signal peptide spans 1–19 (MVGKSTLLSVLASASVAFA). The cysteines at positions 27 and 34 are disulfide-linked. Residues 57–271 (SLESCVPEPV…WAGGEIDWNS (215 aa)) form the GH16 domain. E157 acts as the Nucleophile in catalysis. Catalysis depends on E161, which acts as the Proton donor. Residue E161 participates in chitin binding. N187 and N228 each carry an N-linked (GlcNAc...) asparagine glycan. Positions 248 and 259 each coordinate chitin. N-linked (GlcNAc...) asparagine glycosylation is found at N315, N323, N336, and N371. A lipid anchor (GPI-anchor amidated serine) is attached at S415. The propeptide at 416 to 444 (ADSLVANQERVLKGSLFAGIVAVVAMMAL) is removed in mature form.

It belongs to the glycosyl hydrolase 16 family. CRH1 subfamily. In terms of assembly, forms homodimers as well as heterodimers with other crh protein members crh1 and crh2. Dimerization may be necessary for the transglycosylation activity.

It is found in the cell membrane. It catalyses the reaction Random endo-hydrolysis of N-acetyl-beta-D-glucosaminide (1-&gt;4)-beta-linkages in chitin and chitodextrins.. In terms of biological role, dual chitinase/transglycosylase that plays a role in cell wall architecture. Chitinase and transglycosylase activities are coupled. Required for the polysaccharide cross-linking at the septa and the cell wall. More specifically, transfers chitin to 1,6-beta-glucan in the cell wall. The sequence is that of Crh-like protein 3 from Botryotinia fuckeliana (strain B05.10) (Noble rot fungus).